Here is a 476-residue protein sequence, read N- to C-terminus: Ribulose bisphosphate carboxylase large chain (476 aa).

Substrate-binding residues include asparagine 124 and threonine 174. Lysine 176 functions as the Proton acceptor in the catalytic mechanism. Lysine 178 contributes to the substrate binding site. Mg(2+)-binding residues include lysine 202, aspartate 204, and glutamate 205. Position 202 is an N6-carboxylysine (lysine 202). The Proton acceptor role is filled by histidine 295. Substrate contacts are provided by arginine 296, histidine 328, and serine 380.

The protein belongs to the RuBisCO large chain family. Type I subfamily. As to quaternary structure, heterohexadecamer of 8 large chains and 8 small chains; disulfide-linked. The disulfide link is formed within the large subunit homodimers. Requires Mg(2+) as cofactor. Post-translationally, the disulfide bond which can form in the large chain dimeric partners within the hexadecamer appears to be associated with oxidative stress and protein turnover.

The protein localises to the carboxysome. It catalyses the reaction 2 (2R)-3-phosphoglycerate + 2 H(+) = D-ribulose 1,5-bisphosphate + CO2 + H2O. The enzyme catalyses D-ribulose 1,5-bisphosphate + O2 = 2-phosphoglycolate + (2R)-3-phosphoglycerate + 2 H(+). Functionally, ruBisCO catalyzes two reactions: the carboxylation of D-ribulose 1,5-bisphosphate, the primary event in carbon dioxide fixation, as well as the oxidative fragmentation of the pentose substrate in the photorespiration process. Both reactions occur simultaneously and in competition at the same active site. The polypeptide is Ribulose bisphosphate carboxylase large chain (Nostoc punctiforme (strain ATCC 29133 / PCC 73102)).